The sequence spans 329 residues: Beta-ketoacyl-[acyl-carrier-protein] synthase III (329 aa).

Active-site residues include C123 and H256. An ACP-binding region spans residues 257–261 (QANIR). N286 is a catalytic residue.

The protein belongs to the thiolase-like superfamily. FabH family. Homodimer.

The protein localises to the cytoplasm. The enzyme catalyses malonyl-[ACP] + acetyl-CoA + H(+) = 3-oxobutanoyl-[ACP] + CO2 + CoA. The protein operates within lipid metabolism; fatty acid biosynthesis. Catalyzes the condensation reaction of fatty acid synthesis by the addition to an acyl acceptor of two carbons from malonyl-ACP. Catalyzes the first condensation reaction which initiates fatty acid synthesis and may therefore play a role in governing the total rate of fatty acid production. Possesses both acetoacetyl-ACP synthase and acetyl transacylase activities. Its substrate specificity determines the biosynthesis of branched-chain and/or straight-chain of fatty acids. This is Beta-ketoacyl-[acyl-carrier-protein] synthase III from Burkholderia orbicola (strain AU 1054).